The primary structure comprises 181 residues: Protein GrpE (181 aa).

Over residues 1-24 (MSEENIGENEVETPETEPSAEAEV) the composition is skewed to acidic residues. Residues 1–26 (MSEENIGENEVETPETEPSAEAEVES) form a disordered region.

The protein belongs to the GrpE family. In terms of assembly, homodimer.

It localises to the cytoplasm. In terms of biological role, participates actively in the response to hyperosmotic and heat shock by preventing the aggregation of stress-denatured proteins, in association with DnaK and GrpE. It is the nucleotide exchange factor for DnaK and may function as a thermosensor. Unfolded proteins bind initially to DnaJ; upon interaction with the DnaJ-bound protein, DnaK hydrolyzes its bound ATP, resulting in the formation of a stable complex. GrpE releases ADP from DnaK; ATP binding to DnaK triggers the release of the substrate protein, thus completing the reaction cycle. Several rounds of ATP-dependent interactions between DnaJ, DnaK and GrpE are required for fully efficient folding. The polypeptide is Protein GrpE (Rhizorhabdus wittichii (strain DSM 6014 / CCUG 31198 / JCM 15750 / NBRC 105917 / EY 4224 / RW1) (Sphingomonas wittichii)).